We begin with the raw amino-acid sequence, 509 residues long: Maturase K (509 aa).

It belongs to the intron maturase 2 family. MatK subfamily.

The protein localises to the plastid. It is found in the chloroplast. Usually encoded in the trnK tRNA gene intron. Probably assists in splicing its own and other chloroplast group II introns. The sequence is that of Maturase K from Clematis lasiantha (Pipestem clematis).